The primary structure comprises 292 residues: Homoserine kinase (292 aa).

84-94 (PLSRGLGSSSA) lines the ATP pocket.

Belongs to the GHMP kinase family. Homoserine kinase subfamily.

The protein localises to the cytoplasm. It catalyses the reaction L-homoserine + ATP = O-phospho-L-homoserine + ADP + H(+). Its pathway is amino-acid biosynthesis; L-threonine biosynthesis; L-threonine from L-aspartate: step 4/5. Its function is as follows. Catalyzes the ATP-dependent phosphorylation of L-homoserine to L-homoserine phosphate. The polypeptide is Homoserine kinase (Campylobacter jejuni subsp. jejuni serotype O:2 (strain ATCC 700819 / NCTC 11168)).